The following is a 418-amino-acid chain: Putative ion-transport protein YfeO (418 aa).

Helical transmembrane passes span 9 to 31 (MLLL…IMVM), 55 to 77 (SPLW…IRFS), 90 to 112 (LIGA…LGLA), 122 to 140 (PIIT…RLLP), 147 to 169 (WTIL…AALI), 189 to 211 (PLMA…FSLP), 223 to 244 (ILSG…VWCL), 259 to 281 (FVLG…VSLF), 301 to 323 (YFLL…FRGG), 343 to 363 (VPAV…VLVV), and 376 to 398 (VVVP…WLLL).

It belongs to the chloride channel (TC 2.A.49) family.

The protein localises to the cell membrane. This is Putative ion-transport protein YfeO (yfeO) from Escherichia coli O6:H1 (strain CFT073 / ATCC 700928 / UPEC).